The chain runs to 179 residues: Large ribosomal subunit protein uL5 (179 aa).

It belongs to the universal ribosomal protein uL5 family. As to quaternary structure, part of the 50S ribosomal subunit; part of the 5S rRNA/L5/L18/L25 subcomplex. Contacts the 5S rRNA and the P site tRNA. Forms a bridge to the 30S subunit in the 70S ribosome.

In terms of biological role, this is one of the proteins that bind and probably mediate the attachment of the 5S RNA into the large ribosomal subunit, where it forms part of the central protuberance. In the 70S ribosome it contacts protein S13 of the 30S subunit (bridge B1b), connecting the 2 subunits; this bridge is implicated in subunit movement. Contacts the P site tRNA; the 5S rRNA and some of its associated proteins might help stabilize positioning of ribosome-bound tRNAs. The sequence is that of Large ribosomal subunit protein uL5 from Bdellovibrio bacteriovorus (strain ATCC 15356 / DSM 50701 / NCIMB 9529 / HD100).